An 87-amino-acid polypeptide reads, in one-letter code: U3-theraphotoxin-Hhn1a 18 (87 aa).

Positions 1–24 (MVNTKASMFLTFAGLVLLFVVCYA) are cleaved as a signal peptide. Residues 25-52 (SESEEKEFPKEMLSSIFAVDNDFKQEER) constitute a propeptide that is removed on maturation. 3 disulfides stabilise this stretch: cysteine 54/cysteine 67, cysteine 61/cysteine 72, and cysteine 66/cysteine 79.

The protein belongs to the neurotoxin 10 (Hwtx-1) family. 51 (Hntx-8) subfamily. Hntx-8 sub-subfamily. In terms of tissue distribution, expressed by the venom gland.

The protein resides in the secreted. Its function is as follows. Ion channel inhibitor. This is U3-theraphotoxin-Hhn1a 18 from Cyriopagopus hainanus (Chinese bird spider).